We begin with the raw amino-acid sequence, 266 residues long: UPF0294 protein YafD (266 aa).

This sequence belongs to the UPF0294 family.

It localises to the cytoplasm. The polypeptide is UPF0294 protein YafD (Salmonella newport (strain SL254)).